The chain runs to 394 residues: 1-deoxy-D-xylulose 5-phosphate reductoisomerase (394 aa).

Residues Thr-13, Gly-14, Thr-15, Ile-16, and Asn-125 each coordinate NADPH. Lys-126 contacts 1-deoxy-D-xylulose 5-phosphate. Residue Glu-127 coordinates NADPH. A Mn(2+)-binding site is contributed by Asp-151. 1-deoxy-D-xylulose 5-phosphate contacts are provided by Ser-152, Glu-153, Ser-182, and His-205. Glu-153 serves as a coordination point for Mn(2+). Gly-211 serves as a coordination point for NADPH. Residues Ser-218, Asn-223, Lys-224, and Glu-227 each coordinate 1-deoxy-D-xylulose 5-phosphate. Glu-227 provides a ligand contact to Mn(2+).

It belongs to the DXR family. Mg(2+) is required as a cofactor. The cofactor is Mn(2+).

The catalysed reaction is 2-C-methyl-D-erythritol 4-phosphate + NADP(+) = 1-deoxy-D-xylulose 5-phosphate + NADPH + H(+). It functions in the pathway isoprenoid biosynthesis; isopentenyl diphosphate biosynthesis via DXP pathway; isopentenyl diphosphate from 1-deoxy-D-xylulose 5-phosphate: step 1/6. Functionally, catalyzes the NADPH-dependent rearrangement and reduction of 1-deoxy-D-xylulose-5-phosphate (DXP) to 2-C-methyl-D-erythritol 4-phosphate (MEP). The sequence is that of 1-deoxy-D-xylulose 5-phosphate reductoisomerase from Methylobacillus flagellatus (strain ATCC 51484 / DSM 6875 / VKM B-1610 / KT).